The following is a 141-amino-acid chain: Cystatin (141 aa).

The signal sequence occupies residues 1–26 (MVHSQLPVAAPLRLLCALLLLPSATM). The Cystatin domain maps to 29 to 129 (GGLYPRSVTD…CHFQVWSRPW (101 aa)). The Secondary area of contact motif lies at 73–77 (QVVTG). Disulfide bonds link Cys91/Cys107 and Cys120/Cys140.

Belongs to the cystatin family. As to expression, expressed by the venom gland at an extremely low level (at protein level).

The protein localises to the secreted. Functionally, inhibits various C1 cysteine proteases including cathepsin L, papain and cathepsin B. This protein has no toxic activity and its function in the venom is unknown. It may play a role as a housekeeping or regulatory protein. This Tropidechis carinatus (Australian rough-scaled snake) protein is Cystatin.